The primary structure comprises 230 residues: Cytidylate kinase (230 aa).

Position 12–20 (12–20 (GPSGAGKGT)) interacts with ATP.

It belongs to the cytidylate kinase family. Type 1 subfamily.

The protein localises to the cytoplasm. The enzyme catalyses CMP + ATP = CDP + ADP. The catalysed reaction is dCMP + ATP = dCDP + ADP. In Shewanella baltica (strain OS223), this protein is Cytidylate kinase.